Here is a 209-residue protein sequence, read N- to C-terminus: Small ribosomal subunit protein uS4 (209 aa).

The S4 RNA-binding domain maps to 99–160 (ARLDSVAYRM…RARASLRCKA (62 aa)).

The protein belongs to the universal ribosomal protein uS4 family. Part of the 30S ribosomal subunit. Contacts protein S5. The interaction surface between S4 and S5 is involved in control of translational fidelity.

In terms of biological role, one of the primary rRNA binding proteins, it binds directly to 16S rRNA where it nucleates assembly of the body of the 30S subunit. Functionally, with S5 and S12 plays an important role in translational accuracy. The chain is Small ribosomal subunit protein uS4 from Dechloromonas aromatica (strain RCB).